The sequence spans 467 residues: Retinoic acid receptor RXR-gamma (467 aa).

The interval 1–142 (MYGNYPHFIK…TSPGSLAKHI (142 aa)) is modulating. 2 consecutive NR C4-type zinc fingers follow at residues 143-163 (CAIC…CEGC) and 179-203 (CRDN…YQKC). Residues 143–208 (CAICGDRSSG…RYQKCLAMGM (66 aa)) constitute a DNA-binding region (nuclear receptor). The segment at 209–232 (KREAVQEERQGSRERSENEAESTS) is hinge. The segment covering 214-226 (QEERQGSRERSEN) has biased composition (basic and acidic residues). The interval 214-237 (QEERQGSRERSENEAESTSGGSED) is disordered. In terms of domain architecture, NR LBD spans 235 to 463 (SEDMPVERIL…TFLMEMLETP (229 aa)).

This sequence belongs to the nuclear hormone receptor family. NR2 subfamily. Homodimer. Heterodimer; with a RAR molecule. Binds DNA preferentially as a RAR/RXR heterodimer. Isoform 1 is highly expressed inliver. Isoform 2 is abundantly expressed in eye and dorsal root ganglia.

It localises to the nucleus. Receptor for retinoic acid. Retinoic acid receptors bind as heterodimers to their target response elements in response to their ligands, all-trans or 9-cis retinoic acid, and regulate gene expression in various biological processes. The RAR/RXR heterodimers bind to the retinoic acid response elements (RARE) composed of tandem 5'-AGGTCA-3' sites known as DR1-DR5. The high affinity ligand for RXRs is 9-cis retinoic acid. The polypeptide is Retinoic acid receptor RXR-gamma (RXRG) (Gallus gallus (Chicken)).